We begin with the raw amino-acid sequence, 137 residues long: Large ribosomal subunit protein uL16 (137 aa).

This sequence belongs to the universal ribosomal protein uL16 family. In terms of assembly, part of the 50S ribosomal subunit.

Binds 23S rRNA and is also seen to make contacts with the A and possibly P site tRNAs. The sequence is that of Large ribosomal subunit protein uL16 from Stutzerimonas stutzeri (strain A1501) (Pseudomonas stutzeri).